Here is an 85-residue protein sequence, read N- to C-terminus: Alpha-defensin 11 (85 aa).

The first 11 residues, 1–11 (ALVLLAFQVQA), serve as a signal peptide directing secretion. Positions 12–50 (DPIQNTDEETKTEEQPGEEDQAVSVSFGDPEGTSLQEES) are excised as a propeptide. The segment at 14–46 (IQNTDEETKTEEQPGEEDQAVSVSFGDPEGTSL) is disordered. 3 disulfides stabilise this stretch: C56–C84, C58–C73, and C63–C83.

This sequence belongs to the alpha-defensin family. In terms of tissue distribution, paneth cells of the small bowel.

The protein resides in the secreted. Its function is as follows. Probably contributes to the antimicrobial barrier function of the small bowel mucosa. The sequence is that of Alpha-defensin 11 (Defa11) from Mus musculus (Mouse).